The sequence spans 320 residues: Ribonuclease Z (320 aa).

7 residues coordinate Zn(2+): His-63, His-65, Asp-67, His-68, His-141, Asp-212, and His-270. The active-site Proton acceptor is Asp-67.

The protein belongs to the RNase Z family. In terms of assembly, homodimer. It depends on Zn(2+) as a cofactor.

The enzyme catalyses Endonucleolytic cleavage of RNA, removing extra 3' nucleotides from tRNA precursor, generating 3' termini of tRNAs. A 3'-hydroxy group is left at the tRNA terminus and a 5'-phosphoryl group is left at the trailer molecule.. Its function is as follows. Zinc phosphodiesterase, which displays some tRNA 3'-processing endonuclease activity. Probably involved in tRNA maturation, by removing a 3'-trailer from precursor tRNA. This is Ribonuclease Z from Lacticaseibacillus casei (strain BL23) (Lactobacillus casei).